Here is a 358-residue protein sequence, read N- to C-terminus: Peptide chain release factor 1 (358 aa).

Gln236 carries the N5-methylglutamine modification.

Belongs to the prokaryotic/mitochondrial release factor family. Methylated by PrmC. Methylation increases the termination efficiency of RF1.

The protein localises to the cytoplasm. Its function is as follows. Peptide chain release factor 1 directs the termination of translation in response to the peptide chain termination codons UAG and UAA. The polypeptide is Peptide chain release factor 1 (Corynebacterium aurimucosum (strain ATCC 700975 / DSM 44827 / CIP 107346 / CN-1) (Corynebacterium nigricans)).